Here is an 863-residue protein sequence, read N- to C-terminus: Scm-like with four MBT domains protein 1 (863 aa).

MBT repeat units follow at residues 20-120 (FSWE…LEAP), 128-232 (SDWS…LQPP), 242-346 (ADWQ…INPP), and 354-451 (FDWA…LSTP). The interval 638-773 (KKKNKRIGRP…SDGENKPPSP (136 aa)) is disordered. Residues 660 to 679 (KTSKRRKRRKNIFVHKKKRS) show a composition bias toward basic residues. The span at 680–691 (SASVDNTPVGSP) shows a compositional bias: polar residues. Positions 696 to 710 (GEDEDDADDGDDDSL) are enriched in acidic residues. 2 positions are modified to phosphoserine: serine 764 and serine 772. The SAM domain occupies 793-861 (WSVADVVRFI…RIKFAFYEQF (69 aa)).

As to quaternary structure, interacts with MYOD1. Component of the SLC (SFMBT1-LSD1-CoREST) corepressor complex, which also contains KDM1A/LSD1 and RCOR1/CoREST. Interacts with KDM1A/LSD1 and RCOR1/CoREST. Interacts with MYOD1. Interacts with L3MBTL3. Highly expressed in the testis, low expression was detected in brain, kidney, heart and lung.

Its subcellular location is the nucleus. In terms of biological role, histone-binding protein, which is part of various corepressor complexes. Mediates the recruitment of corepressor complexes to target genes, followed by chromatin compaction and repression of transcription. Plays a role during myogenesis: required for the maintenance of undifferentiated states of myogenic progenitor cells via interaction with MYOD1. Interaction with MYOD1 leads to the recruitment of associated corepressors and silencing of MYOD1 target genes. Part of the SLC complex in germ cells, where it may play a role during spermatogenesis. The sequence is that of Scm-like with four MBT domains protein 1 (Sfmbt1) from Rattus norvegicus (Rat).